The primary structure comprises 323 residues: Acetyl-coenzyme A carboxylase carboxyl transferase subunit alpha (323 aa).

Residues 39–293 (RLSKKSQQLT…RRALADSLRQ (255 aa)) enclose the CoA carboxyltransferase C-terminal domain.

Belongs to the AccA family. Acetyl-CoA carboxylase is a heterohexamer composed of biotin carboxyl carrier protein (AccB), biotin carboxylase (AccC) and two subunits each of ACCase subunit alpha (AccA) and ACCase subunit beta (AccD).

The protein resides in the cytoplasm. It catalyses the reaction N(6)-carboxybiotinyl-L-lysyl-[protein] + acetyl-CoA = N(6)-biotinyl-L-lysyl-[protein] + malonyl-CoA. Its pathway is lipid metabolism; malonyl-CoA biosynthesis; malonyl-CoA from acetyl-CoA: step 1/1. Functionally, component of the acetyl coenzyme A carboxylase (ACC) complex. First, biotin carboxylase catalyzes the carboxylation of biotin on its carrier protein (BCCP) and then the CO(2) group is transferred by the carboxyltransferase to acetyl-CoA to form malonyl-CoA. This Burkholderia lata (strain ATCC 17760 / DSM 23089 / LMG 22485 / NCIMB 9086 / R18194 / 383) protein is Acetyl-coenzyme A carboxylase carboxyl transferase subunit alpha.